Reading from the N-terminus, the 212-residue chain is ATP-dependent Clp protease proteolytic subunit (212 aa).

Residue Ser-113 is the Nucleophile of the active site. Residue His-138 is part of the active site.

This sequence belongs to the peptidase S14 family. Fourteen ClpP subunits assemble into 2 heptameric rings which stack back to back to give a disk-like structure with a central cavity, resembling the structure of eukaryotic proteasomes.

The protein resides in the cytoplasm. The enzyme catalyses Hydrolysis of proteins to small peptides in the presence of ATP and magnesium. alpha-casein is the usual test substrate. In the absence of ATP, only oligopeptides shorter than five residues are hydrolyzed (such as succinyl-Leu-Tyr-|-NHMec, and Leu-Tyr-Leu-|-Tyr-Trp, in which cleavage of the -Tyr-|-Leu- and -Tyr-|-Trp bonds also occurs).. In terms of biological role, cleaves peptides in various proteins in a process that requires ATP hydrolysis. Has a chymotrypsin-like activity. Plays a major role in the degradation of misfolded proteins. The polypeptide is ATP-dependent Clp protease proteolytic subunit (Saccharophagus degradans (strain 2-40 / ATCC 43961 / DSM 17024)).